The following is a 217-amino-acid chain: Large ribosomal subunit protein uL3 (217 aa).

Residues 135–154 (ATHGNSLSHRAPGSIGQCQT) are disordered. The residue at position 153 (Q153) is an N5-methylglutamine.

The protein belongs to the universal ribosomal protein uL3 family. Part of the 50S ribosomal subunit. Forms a cluster with proteins L14 and L19. Methylated by PrmB.

Functionally, one of the primary rRNA binding proteins, it binds directly near the 3'-end of the 23S rRNA, where it nucleates assembly of the 50S subunit. The protein is Large ribosomal subunit protein uL3 of Coxiella burnetii (strain CbuG_Q212) (Coxiella burnetii (strain Q212)).